The chain runs to 454 residues: uncharacterized protein (454 aa).

Positions 73, 79, 82, and 154 each coordinate [4Fe-4S] cluster. S-adenosyl-L-methionine is bound by residues glutamine 279, phenylalanine 307, aspartate 328, and aspartate 381. Cysteine 408 (nucleophile) is an active-site residue.

It belongs to the class I-like SAM-binding methyltransferase superfamily. RNA M5U methyltransferase family.

This is an uncharacterized protein from Leptospira interrogans serogroup Icterohaemorrhagiae serovar Lai (strain 56601).